Reading from the N-terminus, the 82-residue chain is Small ribosomal subunit protein eS27B (82 aa).

The C4-type zinc finger occupies 37–59; sequence CPGCLNITTVFSHAQTAVTCESC.

Belongs to the eukaryotic ribosomal protein eS27 family. Component of the small ribosomal subunit (SSU). Mature yeast ribosomes consist of a small (40S) and a large (60S) subunit. The 40S small subunit contains 1 molecule of ribosomal RNA (18S rRNA) and 33 different proteins (encoded by 57 genes). The large 60S subunit contains 3 rRNA molecules (25S, 5.8S and 5S rRNA) and 46 different proteins (encoded by 81 genes). Requires Zn(2+) as cofactor. In terms of processing, the N-terminus is not modified.

The protein localises to the cytoplasm. In terms of biological role, component of the ribosome, a large ribonucleoprotein complex responsible for the synthesis of proteins in the cell. The small ribosomal subunit (SSU) binds messenger RNAs (mRNAs) and translates the encoded message by selecting cognate aminoacyl-transfer RNA (tRNA) molecules. The large subunit (LSU) contains the ribosomal catalytic site termed the peptidyl transferase center (PTC), which catalyzes the formation of peptide bonds, thereby polymerizing the amino acids delivered by tRNAs into a polypeptide chain. The nascent polypeptides leave the ribosome through a tunnel in the LSU and interact with protein factors that function in enzymatic processing, targeting, and the membrane insertion of nascent chains at the exit of the ribosomal tunnel. The sequence is that of Small ribosomal subunit protein eS27B from Saccharomyces cerevisiae (strain ATCC 204508 / S288c) (Baker's yeast).